Reading from the N-terminus, the 916-residue chain is DNA mismatch repair protein MutS (916 aa).

The interval 1-47 (MSEALSVPAAEGENTVTASESPDLAATSARAEKVGKQEKPEKAEKQS) is disordered. The segment covering 30 to 45 (RAEKVGKQEKPEKAEK) has biased composition (basic and acidic residues). 656 to 663 (GPNMGGKS) contacts ATP. Positions 843–861 (ADATPTPQMDLFSAQSSPS) are enriched in polar residues. A disordered region spans residues 843–880 (ADATPTPQMDLFSAQSSPSADDEDDKSAGQSAVPPAQA).

The protein belongs to the DNA mismatch repair MutS family.

In terms of biological role, this protein is involved in the repair of mismatches in DNA. It is possible that it carries out the mismatch recognition step. This protein has a weak ATPase activity. In Cupriavidus metallidurans (strain ATCC 43123 / DSM 2839 / NBRC 102507 / CH34) (Ralstonia metallidurans), this protein is DNA mismatch repair protein MutS.